The chain runs to 174 residues: Shikimate kinase (174 aa).

Residue 15–20 coordinates ATP; sequence GTGKST. Position 19 (S19) interacts with Mg(2+). Residues D37, R61, and G82 each contribute to the substrate site. Residue R120 participates in ATP binding. A substrate-binding site is contributed by R138.

It belongs to the shikimate kinase family. Monomer. Mg(2+) serves as cofactor.

It is found in the cytoplasm. It catalyses the reaction shikimate + ATP = 3-phosphoshikimate + ADP + H(+). Its pathway is metabolic intermediate biosynthesis; chorismate biosynthesis; chorismate from D-erythrose 4-phosphate and phosphoenolpyruvate: step 5/7. Catalyzes the specific phosphorylation of the 3-hydroxyl group of shikimic acid using ATP as a cosubstrate. The sequence is that of Shikimate kinase from Staphylococcus aureus (strain NCTC 8325 / PS 47).